Consider the following 164-residue polypeptide: Crossover junction endodeoxyribonuclease RuvC (164 aa).

Catalysis depends on residues Asp-7, Glu-67, and Asp-139. Residues Asp-7, Glu-67, and Asp-139 each coordinate Mg(2+).

The protein belongs to the RuvC family. In terms of assembly, homodimer which binds Holliday junction (HJ) DNA. The HJ becomes 2-fold symmetrical on binding to RuvC with unstacked arms; it has a different conformation from HJ DNA in complex with RuvA. In the full resolvosome a probable DNA-RuvA(4)-RuvB(12)-RuvC(2) complex forms which resolves the HJ. Mg(2+) serves as cofactor.

It localises to the cytoplasm. It carries out the reaction Endonucleolytic cleavage at a junction such as a reciprocal single-stranded crossover between two homologous DNA duplexes (Holliday junction).. In terms of biological role, the RuvA-RuvB-RuvC complex processes Holliday junction (HJ) DNA during genetic recombination and DNA repair. Endonuclease that resolves HJ intermediates. Cleaves cruciform DNA by making single-stranded nicks across the HJ at symmetrical positions within the homologous arms, yielding a 5'-phosphate and a 3'-hydroxyl group; requires a central core of homology in the junction. The consensus cleavage sequence is 5'-(A/T)TT(C/G)-3'. Cleavage occurs on the 3'-side of the TT dinucleotide at the point of strand exchange. HJ branch migration catalyzed by RuvA-RuvB allows RuvC to scan DNA until it finds its consensus sequence, where it cleaves and resolves the cruciform DNA. The sequence is that of Crossover junction endodeoxyribonuclease RuvC from Geobacter sulfurreducens (strain ATCC 51573 / DSM 12127 / PCA).